The following is a 384-amino-acid chain: FAD-dependent urate hydroxylase (384 aa).

Residues G11, 30–31, S43, and V125 each bind FAD; that span reads EA. Substrate is bound by residues N178, R204, and 216 to 218; that span reads YFF. FAD contacts are provided by residues D285 and 295-299; that span reads GQGGC.

The protein belongs to the FAD-dependent urate hydroxylase family. FAD is required as a cofactor.

It catalyses the reaction urate + NADH + O2 + H(+) = 5-hydroxyisourate + NAD(+) + H2O. The protein operates within purine metabolism; urate degradation. In terms of biological role, catalyzes the hydroxylation of uric acid to 5-hydroxyisourate. This Klebsiella oxytoca protein is FAD-dependent urate hydroxylase (hpxO).